The following is a 38-amino-acid chain: Photosystem II reaction center protein L (38 aa).

A helical membrane pass occupies residues Ser17 to Phe37.

This sequence belongs to the PsbL family. PSII is composed of 1 copy each of membrane proteins PsbA, PsbB, PsbC, PsbD, PsbE, PsbF, PsbH, PsbI, PsbJ, PsbK, PsbL, PsbM, PsbT, PsbY, PsbZ, Psb30/Ycf12, at least 3 peripheral proteins of the oxygen-evolving complex and a large number of cofactors. It forms dimeric complexes.

The protein resides in the plastid. The protein localises to the chloroplast thylakoid membrane. In terms of biological role, one of the components of the core complex of photosystem II (PSII). PSII is a light-driven water:plastoquinone oxidoreductase that uses light energy to abstract electrons from H(2)O, generating O(2) and a proton gradient subsequently used for ATP formation. It consists of a core antenna complex that captures photons, and an electron transfer chain that converts photonic excitation into a charge separation. This subunit is found at the monomer-monomer interface and is required for correct PSII assembly and/or dimerization. The chain is Photosystem II reaction center protein L from Euglena gracilis.